Consider the following 354-residue polypeptide: Protein Wnt-8a (354 aa).

An N-terminal signal peptide occupies residues 1–19 (MGHLLMLWVAAGMCYPALG). A disulfide bridge links Cys-54 with Cys-65. An N-linked (GlcNAc...) asparagine glycan is attached at Asn-103. Cystine bridges form between Cys-104/Cys-112, Cys-114/Cys-132, Cys-180/Cys-194, Cys-182/Cys-189, Cys-259/Cys-297, Cys-275/Cys-290, Cys-294/Cys-336, Cys-312/Cys-327, Cys-314/Cys-324, and Cys-319/Cys-320. Ser-186 is lipidated: O-palmitoleoyl serine. Asn-262 carries N-linked (GlcNAc...) asparagine glycosylation.

The protein belongs to the Wnt family. As to quaternary structure, forms a soluble 1:1 complex with AFM; this prevents oligomerization and is required for prolonged biological activity. The complex with AFM may represent the physiological form in body fluids. Post-translationally, palmitoleoylation is required for efficient binding to frizzled receptors. Depalmitoleoylation leads to Wnt signaling pathway inhibition. Proteolytic processing by TIKI1 and TIKI2 promotes oxidation and formation of large disulfide-bond oligomers, leading to inactivation of WNT8A.

The protein localises to the secreted. Its subcellular location is the extracellular space. It is found in the extracellular matrix. Ligand for members of the frizzled family of seven transmembrane receptors. Plays a role in embryonic patterning. The chain is Protein Wnt-8a (Wnt8a) from Mus musculus (Mouse).